A 427-amino-acid chain; its full sequence is Glutamate-1-semialdehyde 2,1-aminomutase (427 aa).

Position 265 is an N6-(pyridoxal phosphate)lysine (Lys265).

Belongs to the class-III pyridoxal-phosphate-dependent aminotransferase family. HemL subfamily. As to quaternary structure, homodimer. The cofactor is pyridoxal 5'-phosphate.

The protein localises to the cytoplasm. It carries out the reaction (S)-4-amino-5-oxopentanoate = 5-aminolevulinate. Its pathway is porphyrin-containing compound metabolism; protoporphyrin-IX biosynthesis; 5-aminolevulinate from L-glutamyl-tRNA(Glu): step 2/2. This chain is Glutamate-1-semialdehyde 2,1-aminomutase, found in Mannheimia succiniciproducens (strain KCTC 0769BP / MBEL55E).